The primary structure comprises 741 residues: Interleukin-17 receptor D (741 aa).

The first 26 residues, 1–26 (MAPGRELGAFLLALLAFCGGRRLAEA), serve as a signal peptide directing secretion. At 27 to 301 (AGGPGGRRGA…VHSPWAGPIR (275 aa)) the chain is on the extracellular side. N-linked (GlcNAc...) asparagine glycosylation is found at N57, N82, N173, N208, and N279. A helical membrane pass occupies residues 302–322 (AIAITVPLVVISAFATLFTVM). At 323–741 (CRKKQQENIY…TDELQAIAPL (419 aa)) the chain is on the cytoplasmic side. In terms of domain architecture, SEFIR spans 357-510 (RPKVFICYSS…LMDNLPQLYS (154 aa)). Residues 688–703 (TETSSITGSVSSSSGL) show a composition bias toward low complexity. Residues 688 to 708 (TETSSITGSVSSSSGLGEEEP) form a disordered region.

The protein resides in the membrane. Functionally, feedback inhibitor of fibroblast growth factor mediated Ras-MAPK signaling and ERK activation. May inhibit FGF-induced FGFR1 tyrosine phosphorylation. Inhibits TGFB-induced epithelial-to-mesenchymal transition in lens epithelial cells. The sequence is that of Interleukin-17 receptor D (IL17RD) from Gallus gallus (Chicken).